Consider the following 242-residue polypeptide: Cysteine-rich venom protein helothermine (242 aa).

A signal peptide spans 1–19; sequence MILLSLYLCLAAMLHQSEG. The SCP domain occupies 41 to 169; the sequence is DKHNNLRRIV…TYKYYQVCQY (129 aa). Cystine bridges form between Cys77-Cys155, Cys94-Cys170, Cys150-Cys167, Cys189-Cys196, Cys192-Cys201, Cys205-Cys237, Cys214-Cys231, and Cys223-Cys235. Residues 205–237 form the ShKT domain; sequence CKQNDVYNNCPDLKKQVGCGHPIMKDCMATCKC.

Belongs to the CRISP family. Expressed by the venom gland.

The protein localises to the secreted. In terms of biological role, alters a variety of ion channel activities, including voltage-gated potassium channels (Kv), voltage-gated calcium channels (L-, N-, and P-type) (Cav) and ryanodine receptors (RyR). Is toxic to mice (causes lethargy, partial paralysis of rear limbs and lowering of body temperature). This is Cysteine-rich venom protein helothermine from Heloderma horridum horridum (Mexican beaded lizard).